The sequence spans 268 residues: 3-methyl-2-oxobutanoate hydroxymethyltransferase (268 aa).

Residues aspartate 44 and aspartate 83 each contribute to the Mg(2+) site. 3-methyl-2-oxobutanoate is bound by residues 44 to 45 (DS), aspartate 83, and lysine 113. Glutamate 115 contributes to the Mg(2+) binding site. Catalysis depends on glutamate 183, which acts as the Proton acceptor.

It belongs to the PanB family. Homodecamer; pentamer of dimers. The cofactor is Mg(2+).

The protein resides in the cytoplasm. It carries out the reaction 3-methyl-2-oxobutanoate + (6R)-5,10-methylene-5,6,7,8-tetrahydrofolate + H2O = 2-dehydropantoate + (6S)-5,6,7,8-tetrahydrofolate. It participates in cofactor biosynthesis; (R)-pantothenate biosynthesis; (R)-pantoate from 3-methyl-2-oxobutanoate: step 1/2. Its function is as follows. Catalyzes the reversible reaction in which hydroxymethyl group from 5,10-methylenetetrahydrofolate is transferred onto alpha-ketoisovalerate to form ketopantoate. This Leptospira biflexa serovar Patoc (strain Patoc 1 / Ames) protein is 3-methyl-2-oxobutanoate hydroxymethyltransferase.